The following is a 350-amino-acid chain: Zona pellucida-binding protein 1 (350 aa).

The signal sequence occupies residues 1-38 (MEASAPDRARRGWRRARAAASPLSRAAVVLLLSALVLR). N113, N186, and N339 each carry an N-linked (GlcNAc...) asparagine glycan.

Belongs to the zona pellucida-binding protein Sp38 family. Post-translationally, N-glycosylated. Expressed in testis. Detected in sperm cells.

The protein resides in the cytoplasmic vesicle. It localises to the secretory vesicle. The protein localises to the acrosome. It is found in the secreted. Its subcellular location is the acrosome membrane. Functionally, plays a role in acrosome compaction and sperm morphogenesis. Is implicated in sperm-oocyte interaction during fertilization. The polypeptide is Zona pellucida-binding protein 1 (ZPBP) (Sus scrofa (Pig)).